The following is a 360-amino-acid chain: Nicotinate-nucleotide--dimethylbenzimidazole phosphoribosyltransferase (360 aa).

Glu327 functions as the Proton acceptor in the catalytic mechanism.

This sequence belongs to the CobT family.

The catalysed reaction is 5,6-dimethylbenzimidazole + nicotinate beta-D-ribonucleotide = alpha-ribazole 5'-phosphate + nicotinate + H(+). Its pathway is nucleoside biosynthesis; alpha-ribazole biosynthesis; alpha-ribazole from 5,6-dimethylbenzimidazole: step 1/2. In terms of biological role, catalyzes the synthesis of alpha-ribazole-5'-phosphate from nicotinate mononucleotide (NAMN) and 5,6-dimethylbenzimidazole (DMB). This is Nicotinate-nucleotide--dimethylbenzimidazole phosphoribosyltransferase from Shewanella baltica (strain OS223).